Consider the following 201-residue polypeptide: Small ribosomal subunit protein uS4 (201 aa).

Residues 27-47 form a disordered region; that stretch reads SKKNYPPGQHGNSRKRKTSEY. Residues 92 to 152 enclose the S4 RNA-binding domain; sequence GRLDNVVYRL…EKSKSMEVIA (61 aa).

Belongs to the universal ribosomal protein uS4 family. As to quaternary structure, part of the 30S ribosomal subunit. Contacts protein S5. The interaction surface between S4 and S5 is involved in control of translational fidelity.

Its function is as follows. One of the primary rRNA binding proteins, it binds directly to 16S rRNA where it nucleates assembly of the body of the 30S subunit. Functionally, with S5 and S12 plays an important role in translational accuracy. The polypeptide is Small ribosomal subunit protein uS4 (Parabacteroides distasonis (strain ATCC 8503 / DSM 20701 / CIP 104284 / JCM 5825 / NCTC 11152)).